We begin with the raw amino-acid sequence, 145 residues long: MIALIQRVTRASVTVEDEVTGKIGPGLLVLLGVEKEDDEQKANRLCERVLGYRIFSDVDGKMNLNVQQAGGSVLVVSQFTLAADTERGMRPSFSGGAAPDRAQALYEYFVERCRQQAINTQTGRFAADMQVELVNDGPVTFWLQV.

The Gly-cisPro motif, important for rejection of L-amino acids motif lies at 137–138 (GP).

Belongs to the DTD family. Homodimer.

The protein resides in the cytoplasm. It catalyses the reaction glycyl-tRNA(Ala) + H2O = tRNA(Ala) + glycine + H(+). The enzyme catalyses a D-aminoacyl-tRNA + H2O = a tRNA + a D-alpha-amino acid + H(+). An aminoacyl-tRNA editing enzyme that deacylates mischarged D-aminoacyl-tRNAs. Also deacylates mischarged glycyl-tRNA(Ala), protecting cells against glycine mischarging by AlaRS. Acts via tRNA-based rather than protein-based catalysis; rejects L-amino acids rather than detecting D-amino acids in the active site. By recycling D-aminoacyl-tRNA to D-amino acids and free tRNA molecules, this enzyme counteracts the toxicity associated with the formation of D-aminoacyl-tRNA entities in vivo and helps enforce protein L-homochirality. This chain is D-aminoacyl-tRNA deacylase, found in Salmonella typhi.